The sequence spans 252 residues: MAASALAWLLLWAAGLVGRLAADISDARFSDGVRATCSEIILRQEFLKDGFHRDLLIKVKFGESIEDLQTCRLLIKHYIPTGLFVDPYELASLRERNITEAVMVSESFNLEAPNYLSTESAVLIYARQDAQCIDCFQAFLPVHYRYHRPHKKDGDTLIVVNNPDLLMHCDQEFPILKCWAQSEVAAPCSLKSEEICQWKNMQYKSILKNLTVQVPVGLTIHTSLVCSVTLLITVLCSTLILLAVFKYGHFSL.

The first 22 residues, 1-22 (MAASALAWLLLWAAGLVGRLAA), serve as a signal peptide directing secretion. Residues N97 and N209 are each glycosylated (N-linked (GlcNAc...) asparagine). A helical membrane pass occupies residues 225–245 (VCSVTLLITVLCSTLILLAVF).

The protein belongs to the PIGX family. As to quaternary structure, part of the glycosylphosphatidylinositol-mannosyltransferase I complex that is composed of PIGM and PIGX. Interacts with PIGM; PIGX stabilizes PIGM.

The protein localises to the endoplasmic reticulum membrane. Its pathway is glycolipid biosynthesis; glycosylphosphatidylinositol-anchor biosynthesis. Stabilizing subunit of the glycosylphosphatidylinositol-mannosyltransferase I complex which catalyzes the transfer of the first mannose, via an alpha-1,4 bond from a dolichol-phosphate-mannose (Dol-P-Man) to the glucosaminyl acyl phosphatidylinositol (GlcN-(acyl)PI) intermediate to generate alpha-D-Man-(1-&gt;4)-alpha-D-GlcN-(1-&gt;6)-(1-radyl,2-acyl-sn-glycero-3-phospho)-2-acyl-inositol and participates in the sixth step of the glycosylphosphatidylinositol-anchor biosynthesis. Probably acts by stabilizing the mannosyltransferase PIGM. The polypeptide is GPI alpha-1,4-mannosyltransferase I, stabilizing subunit (Rattus norvegicus (Rat)).